A 156-amino-acid polypeptide reads, in one-letter code: 17.4 kDa class I heat shock protein (156 aa).

The sHSP domain maps to 42-156; sequence DVAAFTNAKV…PEVKSVDISG (115 aa).

This sequence belongs to the small heat shock protein (HSP20) family. In terms of assembly, may form oligomeric structures. Binds to AKR2A.

The protein localises to the cytoplasm. This chain is 17.4 kDa class I heat shock protein (HSP17.4A), found in Arabidopsis thaliana (Mouse-ear cress).